Consider the following 265-residue polypeptide: 4-hydroxy-tetrahydrodipicolinate reductase (265 aa).

An NAD(+)-binding site is contributed by 9–14 (GARGKM). Residue Lys37 coordinates NADP(+). Residues 99–101 (GTT) and 125–128 (APNF) each bind NAD(+). The active-site Proton donor/acceptor is His155. Residue His156 participates in (S)-2,3,4,5-tetrahydrodipicolinate binding. The active-site Proton donor is Lys159. A (S)-2,3,4,5-tetrahydrodipicolinate-binding site is contributed by 165 to 166 (GT).

Belongs to the DapB family.

The protein resides in the cytoplasm. The enzyme catalyses (S)-2,3,4,5-tetrahydrodipicolinate + NAD(+) + H2O = (2S,4S)-4-hydroxy-2,3,4,5-tetrahydrodipicolinate + NADH + H(+). It catalyses the reaction (S)-2,3,4,5-tetrahydrodipicolinate + NADP(+) + H2O = (2S,4S)-4-hydroxy-2,3,4,5-tetrahydrodipicolinate + NADPH + H(+). The protein operates within amino-acid biosynthesis; L-lysine biosynthesis via DAP pathway; (S)-tetrahydrodipicolinate from L-aspartate: step 4/4. Functionally, catalyzes the conversion of 4-hydroxy-tetrahydrodipicolinate (HTPA) to tetrahydrodipicolinate. The sequence is that of 4-hydroxy-tetrahydrodipicolinate reductase from Lysinibacillus sphaericus (strain C3-41).